Here is a 113-residue protein sequence, read N- to C-terminus: LSM complex subunit lsm7 (113 aa).

Positions 1-17 (MSSLQKRPGPGNSSQPT) are enriched in polar residues. The tract at residues 1-23 (MSSLQKRPGPGNSSQPTERPRKE) is disordered. The 80-residue stretch at 23-102 (ESILDLSRYQ…LVLIAPMDGS (80 aa)) folds into the Sm domain.

This sequence belongs to the snRNP Sm proteins family. Component of the heptameric LSM1-LSM7 complex that forms a seven-membered ring structure with a donut shape. The LSm subunits are arranged in the order lsm1, lsm2, lsm3, lsm6, lsm5, lsm7 and lsm4. Component of the heptameric LSM2-LSM8 complex that forms a seven-membered ring structure with a donut shape. The LSm subunits are arranged in the order lsm8, lsm2, lsm3, lsm6, lsm5, lsm7 and lsm4.

It localises to the cytoplasm. Its subcellular location is the nucleus. Its function is as follows. Component of LSm protein complexes, which are involved in RNA processing and may function in a chaperone-like manner. Component of the cytoplasmic LSM1-LSM7 complex which is involved in mRNA degradation by activating the decapping step. The LSM1-LSM7 complex loads onto the 3'-end of single stranded RNA. Component of the nuclear LSM2-LSM8 complex, which is involved in spliceosome assembly. The LSM2-LSM8 complex plays a role in the biogenesis of the spliceosomal U4/U6-U5 tri-snRNP complex by accelerating prp24-mediated annealing of U4/U6 di-snRNA. The LSM2-LSM8 complex binds U6 snRNA terminating with a cyclic 2',3' phosphate group; RNA with an unmodified 3' hydroxyl or non-cyclic 3' phosphate is bound less tightly. The polypeptide is LSM complex subunit lsm7 (lsm7) (Schizosaccharomyces pombe (strain 972 / ATCC 24843) (Fission yeast)).